A 163-amino-acid polypeptide reads, in one-letter code: ATP synthase subunit b 1 (163 aa).

Residues 5–25 (FDATFFAFVGLILFLALVVYL) form a helical membrane-spanning segment.

It belongs to the ATPase B chain family. As to quaternary structure, F-type ATPases have 2 components, F(1) - the catalytic core - and F(0) - the membrane proton channel. F(1) has five subunits: alpha(3), beta(3), gamma(1), delta(1), epsilon(1). F(0) has three main subunits: a(1), b(2) and c(10-14). The alpha and beta chains form an alternating ring which encloses part of the gamma chain. F(1) is attached to F(0) by a central stalk formed by the gamma and epsilon chains, while a peripheral stalk is formed by the delta and b chains.

It localises to the cell inner membrane. Its function is as follows. F(1)F(0) ATP synthase produces ATP from ADP in the presence of a proton or sodium gradient. F-type ATPases consist of two structural domains, F(1) containing the extramembraneous catalytic core and F(0) containing the membrane proton channel, linked together by a central stalk and a peripheral stalk. During catalysis, ATP synthesis in the catalytic domain of F(1) is coupled via a rotary mechanism of the central stalk subunits to proton translocation. Component of the F(0) channel, it forms part of the peripheral stalk, linking F(1) to F(0). This Rhizobium etli (strain ATCC 51251 / DSM 11541 / JCM 21823 / NBRC 15573 / CFN 42) protein is ATP synthase subunit b 1.